We begin with the raw amino-acid sequence, 457 residues long: Amidophosphoribosyltransferase (457 aa).

The active-site Nucleophile is Cys2. Residues 2-223 (CGVVGIYHPD…PGKAAIIKDG (222 aa)) enclose the Glutamine amidotransferase type-2 domain. Cys239 provides a ligand contact to [4Fe-4S] cluster. Positions 286, 348, and 349 each coordinate Mg(2+). Residues Cys385, Cys438, and Cys441 each coordinate [4Fe-4S] cluster.

In the C-terminal section; belongs to the purine/pyrimidine phosphoribosyltransferase family. Mg(2+) is required as a cofactor. The cofactor is [4Fe-4S] cluster.

The catalysed reaction is 5-phospho-beta-D-ribosylamine + L-glutamate + diphosphate = 5-phospho-alpha-D-ribose 1-diphosphate + L-glutamine + H2O. It participates in purine metabolism; IMP biosynthesis via de novo pathway; N(1)-(5-phospho-D-ribosyl)glycinamide from 5-phospho-alpha-D-ribose 1-diphosphate: step 1/2. Its function is as follows. Catalyzes the formation of phosphoribosylamine from phosphoribosylpyrophosphate (PRPP) and glutamine. This is Amidophosphoribosyltransferase from Archaeoglobus fulgidus (strain ATCC 49558 / DSM 4304 / JCM 9628 / NBRC 100126 / VC-16).